A 360-amino-acid polypeptide reads, in one-letter code: MLVWLAEHLVKYFSGFNVFSYLTFRAIVSLLTALFISLWMGPRLIGWLQKLQIGQVVRNDGPESHFSKRGTPTMGGLMILTSITISVLMWAYPSNPYVWCVLFVLLGYGIVGFVDDYRKVVRKNTDGLIARWKYFWQSVIALVVAFTMYCIGKDTPATQLVVPFFKDIMPQLGLLYILLSYFVIVGTSNAVNLTDGLDGLAIMPTVFVAAGMGLVAWATGNVNFAAYLHIPYIRHAGELVIVCTAIVGAGLGFLWFNTYPAQVFMGDVGSLALGGALGTIAVLLRQEFLLVIMGGVFVMETLSVILQVGSFKLRGQRIFRMAPIHHHYELKGWPEPRVIVRFWIISLMLVLIGLATLKVR.

The next 10 membrane-spanning stretches (helical) occupy residues 27 to 47 (IVSLLTALFISLWMGPRLIGW), 72 to 92 (PTMGGLMILTSITISVLMWAY), 94 to 114 (SNPYVWCVLFVLLGYGIVGFV), 132 to 152 (WKYFWQSVIALVVAFTMYCIG), 168 to 188 (IMPQLGLLYILLSYFVIVGTS), 199 to 219 (GLAIMPTVFVAAGMGLVAWAT), 236 to 256 (AGELVIVCTAIVGAGLGFLWF), 263 to 283 (VFMGDVGSLALGGALGTIAVL), 288 to 308 (FLLVIMGGVFVMETLSVILQV), and 338 to 358 (VIVRFWIISLMLVLIGLATLK).

It belongs to the glycosyltransferase 4 family. MraY subfamily. Mg(2+) is required as a cofactor.

It localises to the cell inner membrane. The enzyme catalyses UDP-N-acetyl-alpha-D-muramoyl-L-alanyl-gamma-D-glutamyl-meso-2,6-diaminopimeloyl-D-alanyl-D-alanine + di-trans,octa-cis-undecaprenyl phosphate = di-trans,octa-cis-undecaprenyl diphospho-N-acetyl-alpha-D-muramoyl-L-alanyl-D-glutamyl-meso-2,6-diaminopimeloyl-D-alanyl-D-alanine + UMP. It participates in cell wall biogenesis; peptidoglycan biosynthesis. In terms of biological role, catalyzes the initial step of the lipid cycle reactions in the biosynthesis of the cell wall peptidoglycan: transfers peptidoglycan precursor phospho-MurNAc-pentapeptide from UDP-MurNAc-pentapeptide onto the lipid carrier undecaprenyl phosphate, yielding undecaprenyl-pyrophosphoryl-MurNAc-pentapeptide, known as lipid I. The chain is Phospho-N-acetylmuramoyl-pentapeptide-transferase from Edwardsiella ictaluri (strain 93-146).